Consider the following 370-residue polypeptide: Nematocyst expressed protein 4 (370 aa).

A signal peptide spans 1–19; it reads MAWTLVLLVLLGTSSCLDA. Residues 34–55 form a disordered region; sequence SGSGSGEEGSSGSGSAPEPVRD. A compositionally biased stretch (gly residues) spans 36–45; sequence SGSGEEGSSG. 3 consecutive ShKT domains span residues 70–102, 113–149, and 155–190; these read CLDKGENCTGDPEQCQENWQEMVVQCPFSCRFC, CTDARGAACKDWADNRNDCLRFPQFMSTECTKSCKLC, and GKKFDKDVRCIEWAKNGYCNEGELYKEKCPHNCEVH. Disulfide bonds link Cys-70-Cys-102, Cys-77-Cys-95, Cys-84-Cys-99, Cys-113-Cys-149, Cys-121-Cys-142, Cys-131-Cys-146, Cys-164-Cys-183, and Cys-173-Cys-187. The span at 306 to 340 shows a compositional bias: pro residues; sequence PYPPPPPPYPEQVPPPPPPPPPPPPPPPYPYPYPY. The tract at residues 306–370 is disordered; the sequence is PYPPPPPPYP…HHKENHSKKS (65 aa). Over residues 349–370 the composition is skewed to basic residues; it reads HKSKKHAKHHEKHHKENHSKKS.

This sequence belongs to the NEP3 family. Nematocytes. In late planulae, transcripts are found throughout the ectoderm in nematocytes, with high concentration of expressing cells in the oral pole. In primary polyps, is expressed in nematocytes in the body wall and physa ectoderm and in the upper and lower pharynx.

The protein localises to the nematocyst. The protein resides in the secreted. This chain is Nematocyst expressed protein 4, found in Nematostella vectensis (Starlet sea anemone).